A 513-amino-acid polypeptide reads, in one-letter code: ATP synthase subunit alpha (513 aa).

169–176 (GDRQCGKT) contacts ATP.

Belongs to the ATPase alpha/beta chains family. F-type ATPases have 2 components, CF(1) - the catalytic core - and CF(0) - the membrane proton channel. CF(1) has five subunits: alpha(3), beta(3), gamma(1), delta(1), epsilon(1). CF(0) has three main subunits: a(1), b(2) and c(9-12). The alpha and beta chains form an alternating ring which encloses part of the gamma chain. CF(1) is attached to CF(0) by a central stalk formed by the gamma and epsilon chains, while a peripheral stalk is formed by the delta and b chains.

The protein localises to the cell inner membrane. It catalyses the reaction ATP + H2O + 4 H(+)(in) = ADP + phosphate + 5 H(+)(out). Produces ATP from ADP in the presence of a proton gradient across the membrane. The alpha chain is a regulatory subunit. In Burkholderia vietnamiensis (strain G4 / LMG 22486) (Burkholderia cepacia (strain R1808)), this protein is ATP synthase subunit alpha.